A 785-amino-acid chain; its full sequence is ATP-dependent 6-phosphofructokinase 1 (785 aa).

The tract at residues 1–389 is N-terminal catalytic PFK domain 1; the sequence is MATTHAPAEP…YHFAYKNTAT (389 aa). ATP contacts are provided by residues Gly23, 86 to 87, and 116 to 119; these read RS and GDGS. Residue Asp117 coordinates Mg(2+). Residues 162–164, Arg199, 206–208, Glu263, Arg291, and 297–300 contribute to the substrate site; these read SID, MGR, and HTQR. Residue Asp164 is the Proton acceptor of the active site. An interdomain linker region spans residues 390–403; that stretch reads PDHPKLILPENKRM. The tract at residues 404-785 is C-terminal regulatory PFK domain 2; it reads RIAIIHVGAP…KTGWSCYENC (382 aa). Residues Arg480, 537-541, Arg575, 582-584, Glu642, Arg668, 674-677, and Arg749 each bind beta-D-fructose 2,6-bisphosphate; these read TISNN, QGG, and HFQQ.

This sequence belongs to the phosphofructokinase type A (PFKA) family. ATP-dependent PFK group I subfamily. Eukaryotic two domain clade 'E' sub-subfamily. As to quaternary structure, homotetramer. The cofactor is Mg(2+).

It localises to the cytoplasm. The catalysed reaction is beta-D-fructose 6-phosphate + ATP = beta-D-fructose 1,6-bisphosphate + ADP + H(+). Its pathway is carbohydrate degradation; glycolysis; D-glyceraldehyde 3-phosphate and glycerone phosphate from D-glucose: step 3/4. Its activity is regulated as follows. Allosterically activated by ADP, AMP, or fructose 2,6-bisphosphate, and allosterically inhibited by ATP or citrate. Functionally, catalyzes the phosphorylation of D-fructose 6-phosphate to fructose 1,6-bisphosphate by ATP, the first committing step of glycolysis. The sequence is that of ATP-dependent 6-phosphofructokinase 1 (pfkA) from Aspergillus oryzae (strain ATCC 42149 / RIB 40) (Yellow koji mold).